The primary structure comprises 1251 residues: Cyclic nucleotide-gated channel beta-1 (1251 aa).

Disordered stretches follow at residues 1–75, 121–151, 172–252, and 314–561; these read MLGW…QETK, ITED…EAQD, QPPK…TRDP, and EDAH…STNS. The Cytoplasmic segment spans residues 1–656; sequence MLGWVQRVLP…SIDPLTNLMY (656 aa). Acidic residues predominate over residues 23 to 50; sequence EEEEVEPEPEMEAEVEPEPNPEEAETES. Polar residues predominate over residues 238-247; the sequence is GSQAQTSSLP. Positions 335-352 are enriched in basic and acidic residues; it reads EENKAVEKMPRELSRIEE. Residues 353–373 are compositionally biased toward acidic residues; sequence EKEDEEEEEEEEEEEEEEEVT. Residues 404-423 show a composition bias toward basic and acidic residues; it reads KLWEEVGEEAKKEAEEKAKE. The segment covering 424–434 has biased composition (acidic residues); the sequence is EAEEVAEEEAE. The segment covering 435–446 has biased composition (basic and acidic residues); that stretch reads KEPQDWAETKEE. A calmodulin-binding CaM1 region spans residues 557–567; it reads ASTNSAIINDR. An IQ-like motif is present at residues 568–578; sequence LQELVKLFKER. Residues 585–619 are disordered; it reads KLIDPDVTSDEESPKPSPAKKAPEPAPDTKPAEAE. The helical transmembrane segment at 657-678 threads the bilayer; sequence VLWLFFVVMAWNWNCWLIPVRW. The Extracellular portion of the chain corresponds to 679–687; the sequence is AFPYQTPDN. A helical membrane pass occupies residues 688–709; it reads IHHWLLMDYLCDLIYFLDITVF. The Cytoplasmic segment spans residues 710–724; the sequence is QTRLQFVRGGDIITD. A helical transmembrane segment spans residues 725–744; the sequence is KKDMRNNYLKSRRFKMDLLS. Residues 745-760 are Extracellular-facing; the sequence is LLPLDFLYLKVGVNPL. Residues 761–773 form a helical membrane-spanning segment; it reads LRLPRCLKYMAFF. The Cytoplasmic segment spans residues 774–785; sequence EFNSRLESILSK. The chain crosses the membrane as a helical span at residues 786 to 808; it reads AYVYRVIRTTAYLLYSLHLNSCL. The segment at 786 to 885 is ion conduction pathway; sequence AYVYRVIRTT…IGQMRDVVGA (100 aa). Residues 809 to 831 are Extracellular-facing; that stretch reads YYWASAYQGLGSTHWVYDGVGNS. The next 2 helical transmembrane spans lie at 832–858 and 859–884; these read YIRC…LFEI and VFQL…DVVG. Residues 885-1251 are Cytoplasmic-facing; the sequence is AATAGQTYYR…MPEEREEKAE (367 aa). A C-linker region spans residues 888-964; that stretch reads AGQTYYRSCM…NIVSKVALFQ (77 aa). The cyclic nucleotide-binding domain stretch occupies residues 968 to 1084; sequence RQMIFDMLKR…LLRKKARRML (117 aa). 5 residues coordinate 3',5'-cyclic GMP: Gly-1029, Glu-1030, Ser-1032, Arg-1042, and Thr-1043. Arg-1042 contributes to the 3',5'-cyclic AMP binding site. Positions 1148 to 1154 are calmodulin-binding CaM2; it reads QQELVEQ. The disordered stretch occupies residues 1151–1251; the sequence is LVEQAKSSQD…MPEEREEKAE (101 aa). Residues 1183–1203 are compositionally biased toward pro residues; the sequence is PPAPRTPPEPPGSPPSSPPPA. Residues 1242–1251 show a composition bias toward basic and acidic residues; that stretch reads MPEEREEKAE.

The protein belongs to the cyclic nucleotide-gated cation channel (TC 1.A.1.5) family. CNGB1 subfamily. As to quaternary structure, the rod cyclic nucleotide-gated channel is a heterotetramer composed of CNGA1 and CNGB1 subunits with 3:1 stoichiometry. CNGA1:CNGB1 channel binds Ca(2+)-bound CALM1 via CaM1 and CaM2 regions of the CNGB1 subunit; this interaction modulates the affinity of the channel for cNMPs in response to intracellular Ca(2+) levels. The olfactory cyclic nucleotide-gated channel is a heterotetramer composed of CNGA2, CNGA4 and CNGB1 subunits with 2:1:1 stoichiometry.

The protein localises to the cell membrane. The protein resides in the cell projection. Its subcellular location is the cilium membrane. The enzyme catalyses Ca(2+)(in) = Ca(2+)(out). The catalysed reaction is Na(+)(in) = Na(+)(out). It carries out the reaction K(+)(in) = K(+)(out). It catalyses the reaction NH4(+)(in) = NH4(+)(out). The enzyme catalyses Rb(+)(in) = Rb(+)(out). The catalysed reaction is Li(+)(in) = Li(+)(out). It carries out the reaction Cs(+)(in) = Cs(+)(out). Functionally, pore-forming subunit of the rod cyclic nucleotide-gated channel. Mediates rod photoresponses at dim light converting transient changes in intracellular cGMP levels into electrical signals. In the dark, cGMP levels are high and keep the channel open enabling a steady inward current carried by Na(+) and Ca(2+) ions that leads to membrane depolarization and neurotransmitter release from synaptic terminals. Upon photon absorption cGMP levels decline leading to channel closure and membrane hyperpolarization that ultimately slows neurotransmitter release and signals the presence of light, the end point of the phototransduction cascade. Pore-forming subunit of the olfactory cyclic nucleotide-gated channel. Operates in the cilia of olfactory sensory neurons where chemical stimulation of the odorant is converted to an electrical signal. Mediates odorant-induced cAMP-dependent Ca(2+) influx triggering neuron depolarization. The rise of intracellular Ca(2+) levels potentiates the olfactory response by activating Ca(2+)-dependent Cl(-) channels, but it also serves as a negative feedback signal to desensitize the channel for rapid adaptation to odorants. Conducts cGMP- and cAMP-gated ion currents, with permeability for monovalent and divalent cations. The selectivity for Ca(2+) over Na(+) increases with cGMP concentrations, whereas the selectivity among monovalent ions is independent of the cGMP levels. In terms of biological role, high affinity rod photoreceptor phosphodiesterase (PDE6)-binding protein that modulates its catalytic properties: it is a regulator of spontaneous activation of rod PDE6, thereby serving to lower rod photoreceptor 'dark noise' and allowing these sensory cells to operate at the single photon detection limit. The sequence is that of Cyclic nucleotide-gated channel beta-1 from Homo sapiens (Human).